The primary structure comprises 207 residues: Gene 66 protein (207 aa).

The protein is Gene 66 protein (66) of Mycobacterium (Mycobacteriophage L5).